Consider the following 64-residue polypeptide: Large ribosomal subunit protein bL35 (64 aa).

The protein belongs to the bacterial ribosomal protein bL35 family.

The protein is Large ribosomal subunit protein bL35 of Amoebophilus asiaticus (strain 5a2).